The primary structure comprises 7785 residues: Probable non-canonical nonribosomal peptide synthetase (NRPS) CymA (7785 aa).

3 consecutive Carrier domains span residues Thr-487–Glu-562, His-1908–Gln-1983, and Ser-2958–Gly-3033. 3 positions are modified to O-(pantetheine 4'-phosphoryl)serine: Ser-522, Ser-1943, and Ser-2993. The LRR 1 repeat unit spans residues Arg-3088 to Asn-3111. 3 Carrier domains span residues Ala-3978–Gln-4053, Glu-5002–Asn-5077, and Gly-6389–Ser-6464. Residues Ser-4013, Ser-5037, and Ser-6424 each carry the O-(pantetheine 4'-phosphoryl)serine modification. Residues Thr-6853–Ala-6875 form an LRR 2 repeat. In terms of domain architecture, Carrier 7 spans Gly-7432–Gly-7507. At Ser-7467 the chain carries O-(pantetheine 4'-phosphoryl)serine.

Pantetheine 4'-phosphate serves as cofactor.

Functionally, probable non-canonical nonribosomal peptide synthetase (NRPS); part of the gene cluster that mediates the biosynthesis of cyclic heptapeptides, known as cyclomarins and also of cyclic dipeptides, called cyclomarazines, which have both antimicrobial and cytotoxic effects. First, CymD catalyzes the reverse N-prenylation of monomeric L-tryptophan with dimethylallyl diphosphate (DMAPP) to form N-(1,1-dimethylallyl)-tryptophan (r-N-DMAT). The N-(1,1-dimethylallyl)-tryptophan produced by CymD is then combined with a range of standard and nonproteinogenic amino acid substrates to synthesize the peptides, a process that is probably catalyzed by the non-canonical nonribosomal peptide synthetase (NRPS), CymA. Other proteins in the cluster catalyze further modifications of the peptides including CymV which catalyzes the oxidation of olefinic cyclomarins and cyclomarazines to their respective epoxide derivatives. The chain is Probable non-canonical nonribosomal peptide synthetase (NRPS) CymA from Salinispora arenicola (strain CNS-205).